Consider the following 385-residue polypeptide: 1-deoxy-D-xylulose 5-phosphate reductoisomerase (385 aa).

T13, G14, S15, I16, N40, and N122 together coordinate NADPH. K123 provides a ligand contact to 1-deoxy-D-xylulose 5-phosphate. E124 contributes to the NADPH binding site. D148 contacts Mn(2+). Positions 149, 150, 177, and 200 each coordinate 1-deoxy-D-xylulose 5-phosphate. Mn(2+) is bound at residue E150. Residue G206 participates in NADPH binding. 1-deoxy-D-xylulose 5-phosphate-binding residues include S213, N218, K219, and E222. E222 serves as a coordination point for Mn(2+).

This sequence belongs to the DXR family. Requires Mg(2+) as cofactor. The cofactor is Mn(2+).

The enzyme catalyses 2-C-methyl-D-erythritol 4-phosphate + NADP(+) = 1-deoxy-D-xylulose 5-phosphate + NADPH + H(+). Its pathway is isoprenoid biosynthesis; isopentenyl diphosphate biosynthesis via DXP pathway; isopentenyl diphosphate from 1-deoxy-D-xylulose 5-phosphate: step 1/6. Its function is as follows. Catalyzes the NADPH-dependent rearrangement and reduction of 1-deoxy-D-xylulose-5-phosphate (DXP) to 2-C-methyl-D-erythritol 4-phosphate (MEP). This chain is 1-deoxy-D-xylulose 5-phosphate reductoisomerase, found in Francisella tularensis subsp. tularensis (strain WY96-3418).